Consider the following 300-residue polypeptide: Protein orai (300 aa).

Residues 1-128 (MPRSHDPSRV…SKAQLKASSR (128 aa)) are Cytoplasmic-facing. Residues 58-82 (QPPSSGGGSRNVGGGDGAAGNSKNG) form a disordered region. A compositionally biased stretch (gly residues) spans 62–75 (SGGGSRNVGGGDGA). A helical membrane pass occupies residues 129-146 (TSALLAGFAMVCLVELQY). Topologically, residues 147 to 153 (DDSTSKP) are extracellular. Residues 154–174 (LLIVLGVVTSLLVSVHLLALM) form a helical membrane-spanning segment. At 175-205 (MSTCILPYMEATGCTQDSPHLKLKFYIDLSW) the chain is on the cytoplasmic side. Residues 206–226 (LFSTCIGLLLFLVEIGVIFYV) form a helical membrane-spanning segment. Topologically, residues 227 to 237 (KFTAVGYPTAG) are extracellular. Residues 238–258 (YITTAMLIPVGIVFVLFSYLI) traverse the membrane as a helical segment. The Cytoplasmic segment spans residues 259-300 (HKNRVSHSLGRFKDKVDTMKQFLDVEANLQKSTIAPSTIRDI).

The protein belongs to the Orai family.

The protein resides in the membrane. In terms of biological role, ca(2+) release-activated Ca(2+)-like (CRAC-like) channel subunit which mediates Ca(2+) influx and increase in Ca(2+)-selective current by synergy with the Ca(2+) sensor, stim-1. Required for Ca(2+) and IP3-dependent contractile activity of sheath cells and the spermatheca. Affects brood size and somatic cell function. The protein is Protein orai (orai-1) of Caenorhabditis briggsae.